The following is a 115-amino-acid chain: Thiosulfate:glutathione sulfurtransferase (115 aa).

Residues 17–115 (ASGRARLFDV…AYREWLEKES (99 aa)) form the Rhodanese domain. Catalysis depends on Cys79, which acts as the Cysteine persulfide intermediate.

As to expression, highly expressed in kidney, liver and skeletal muscle. Lower levels of expression in heart, colon, thymus, spleen, placenta and lung. Weakly expressed in brain, small intestine and peripheral blood leukocytes. Expressed at high levels in the breast carcinoma cell lines MCF-7 and MDA-MB-468 and at a lower level in the breast carcinoma cell line MDA-MB-231, the colon carcinoma call line LoVo and the lung carcinoma cell line A-549. No expression in the cell lines EFO-27 and HeLa, or the normal breast tissue cell lines MCF-10A and H184A1. Detected in invasive ductal carcinoma, but not in the adjacent tissues.

The protein localises to the cytoplasm. Its subcellular location is the perinuclear region. The enzyme catalyses thiosulfate + glutathione = S-sulfanylglutathione + sulfite + H(+). The catalysed reaction is thiosulfate + 2 glutathione = glutathione disulfide + hydrogen sulfide + sulfite + 2 H(+). With respect to regulation, GSS(-) is a potent inhibitor of TSTD1, since the presence of the sulfur dioxygenase (SDO) strongly increases the TSTD1 catalytic activity. Its function is as follows. Thiosulfate:glutathione sulfurtransferase (TST) required to produce S-sulfanylglutathione (GSS(-)), a central intermediate in hydrogen sulfide metabolism. Provides the link between the first step in mammalian H(2)S metabolism performed by the sulfide:quinone oxidoreductase (SQOR) which catalyzes the conversion of H(2)S to thiosulfate, and the sulfur dioxygenase (SDO) which uses GSS(-) as substrate. The thermodynamic coupling of the irreversible SDO and reversible TST reactions provides a model for the physiologically relevant reaction with thiosulfate as the sulfane donor. GSS(-) spontaneously reacts with glutathione to form glutathione disulfide. This is Thiosulfate:glutathione sulfurtransferase (TSTD1) from Homo sapiens (Human).